The following is a 264-amino-acid chain: Indole-3-glycerol phosphate synthase (264 aa).

It belongs to the TrpC family.

The catalysed reaction is 1-(2-carboxyphenylamino)-1-deoxy-D-ribulose 5-phosphate + H(+) = (1S,2R)-1-C-(indol-3-yl)glycerol 3-phosphate + CO2 + H2O. Its pathway is amino-acid biosynthesis; L-tryptophan biosynthesis; L-tryptophan from chorismate: step 4/5. The protein is Indole-3-glycerol phosphate synthase of Stenotrophomonas maltophilia (strain R551-3).